The chain runs to 623 residues: ATP-dependent lipid A-core flippase (623 aa).

Transmembrane regions (helical) follow at residues 66 to 86 (LVLA…LAVI), 103 to 123 (VWFL…CNFF), 190 to 210 (LVVI…TLII), 290 to 310 (LTPL…AVAL), and 317 to 337 (ALTV…FDPI). The ABC transmembrane type-1 domain maps to 67–349 (VLAVLLMAGA…LTNLAGKMQK (283 aa)). The 237-residue stretch at 382–618 (VEFRAVSHRF…NGLYASLYNM (237 aa)) folds into the ABC transporter domain. 416–423 (GRSGSGKT) contacts ATP.

The protein belongs to the ABC transporter superfamily. Lipid exporter (TC 3.A.1.106) family. In terms of assembly, homodimer.

It localises to the cell inner membrane. It carries out the reaction ATP + H2O + lipid A-core oligosaccharideSide 1 = ADP + phosphate + lipid A-core oligosaccharideSide 2.. Involved in lipopolysaccharide (LPS) biosynthesis. Translocates lipid A-core from the inner to the outer leaflet of the inner membrane. Transmembrane domains (TMD) form a pore in the inner membrane and the ATP-binding domain (NBD) is responsible for energy generation. This chain is ATP-dependent lipid A-core flippase, found in Bordetella bronchiseptica (strain ATCC BAA-588 / NCTC 13252 / RB50) (Alcaligenes bronchisepticus).